We begin with the raw amino-acid sequence, 149 residues long: Putative pre-16S rRNA nuclease (149 aa).

Belongs to the YqgF nuclease family.

The protein resides in the cytoplasm. Could be a nuclease involved in processing of the 5'-end of pre-16S rRNA. The protein is Putative pre-16S rRNA nuclease of Burkholderia lata (strain ATCC 17760 / DSM 23089 / LMG 22485 / NCIMB 9086 / R18194 / 383).